A 198-amino-acid polypeptide reads, in one-letter code: Holliday junction branch migration complex subunit RuvA (198 aa).

The domain I stretch occupies residues 1-63; it reads MYDYIKGQLT…EDAHLLFGFH (63 aa). The domain II stretch occupies residues 64–142; the sequence is TKDEKDVFLK…EAPQETGNTK (79 aa). The interval 143–147 is flexible linker; sequence ARSNK. Positions 148 to 198 are domain III; sequence AGNTQLDEAIEALLALGYKATELKKIRAFFEGTSETAEQYIKSALKLLMKG.

It belongs to the RuvA family. As to quaternary structure, homotetramer. Forms an RuvA(8)-RuvB(12)-Holliday junction (HJ) complex. HJ DNA is sandwiched between 2 RuvA tetramers; dsDNA enters through RuvA and exits via RuvB. An RuvB hexamer assembles on each DNA strand where it exits the tetramer. Each RuvB hexamer is contacted by two RuvA subunits (via domain III) on 2 adjacent RuvB subunits; this complex drives branch migration. In the full resolvosome a probable DNA-RuvA(4)-RuvB(12)-RuvC(2) complex forms which resolves the HJ.

The protein localises to the cytoplasm. In terms of biological role, the RuvA-RuvB-RuvC complex processes Holliday junction (HJ) DNA during genetic recombination and DNA repair, while the RuvA-RuvB complex plays an important role in the rescue of blocked DNA replication forks via replication fork reversal (RFR). RuvA specifically binds to HJ cruciform DNA, conferring on it an open structure. The RuvB hexamer acts as an ATP-dependent pump, pulling dsDNA into and through the RuvAB complex. HJ branch migration allows RuvC to scan DNA until it finds its consensus sequence, where it cleaves and resolves the cruciform DNA. The sequence is that of Holliday junction branch migration complex subunit RuvA from Streptococcus pyogenes serotype M18 (strain MGAS8232).